The sequence spans 101 residues: Non-structural protein NS-S (101 aa).

It belongs to the orthobunyavirus NS-S protein family.

Functionally, inhibits host transcriptional machinery, by producing modifications to the phosphorylation state of the C-terminal domain (CTD) of RNA polymerase II. Inhibits phosphorylation at serine 2 in the heptapeptide repeat (YSPTSPS) of the CTD of RNA polymerase II, suggesting that the elongation step of transcription and/or 3'-end processing is prevented. Inhibition of host transcription machinery leads to shut off of host cell protein synthesis and inhibition of the host innate immune response. NSs also seems to be involved in the nuclear relocalization of host PABP1. This is Non-structural protein NS-S (N) from Bunyamwera virus (BUNV).